A 189-amino-acid polypeptide reads, in one-letter code: Xanthine phosphoribosyltransferase (189 aa).

The xanthine site is built by leucine 20 and asparagine 27. 127 to 131 (AYGNA) is a 5-phospho-alpha-D-ribose 1-diphosphate binding site. A xanthine-binding site is contributed by lysine 155.

Belongs to the purine/pyrimidine phosphoribosyltransferase family. Xpt subfamily. In terms of assembly, homodimer.

It is found in the cytoplasm. The enzyme catalyses XMP + diphosphate = xanthine + 5-phospho-alpha-D-ribose 1-diphosphate. The protein operates within purine metabolism; XMP biosynthesis via salvage pathway; XMP from xanthine: step 1/1. Converts the preformed base xanthine, a product of nucleic acid breakdown, to xanthosine 5'-monophosphate (XMP), so it can be reused for RNA or DNA synthesis. The polypeptide is Xanthine phosphoribosyltransferase (Bacteroides fragilis (strain ATCC 25285 / DSM 2151 / CCUG 4856 / JCM 11019 / LMG 10263 / NCTC 9343 / Onslow / VPI 2553 / EN-2)).